The sequence spans 177 residues: Large ribosomal subunit protein uL6 (177 aa).

This sequence belongs to the universal ribosomal protein uL6 family. Part of the 50S ribosomal subunit.

Functionally, this protein binds to the 23S rRNA, and is important in its secondary structure. It is located near the subunit interface in the base of the L7/L12 stalk, and near the tRNA binding site of the peptidyltransferase center. This Methanosarcina barkeri (strain Fusaro / DSM 804) protein is Large ribosomal subunit protein uL6.